Here is a 191-residue protein sequence, read N- to C-terminus: Holliday junction branch migration complex subunit RuvA (191 aa).

A domain I region spans residues 1–64 (MIRGVRGTLV…EDELALYGFA (64 aa)). Positions 65 to 136 (TEAELELFLS…ELRGRLPALT (72 aa)) are domain II. The flexible linker stretch occupies residues 136 to 139 (TEVQ). The segment at 140–191 (AGEPIDQELVAALQALGYTAQEARQAATHPEVRRAPSLEERIVAALRQLAPP) is domain III.

The protein belongs to the RuvA family. As to quaternary structure, homotetramer. Forms an RuvA(8)-RuvB(12)-Holliday junction (HJ) complex. HJ DNA is sandwiched between 2 RuvA tetramers; dsDNA enters through RuvA and exits via RuvB. An RuvB hexamer assembles on each DNA strand where it exits the tetramer. Each RuvB hexamer is contacted by two RuvA subunits (via domain III) on 2 adjacent RuvB subunits; this complex drives branch migration. In the full resolvosome a probable DNA-RuvA(4)-RuvB(12)-RuvC(2) complex forms which resolves the HJ.

Its subcellular location is the cytoplasm. Its function is as follows. The RuvA-RuvB-RuvC complex processes Holliday junction (HJ) DNA during genetic recombination and DNA repair, while the RuvA-RuvB complex plays an important role in the rescue of blocked DNA replication forks via replication fork reversal (RFR). RuvA specifically binds to HJ cruciform DNA, conferring on it an open structure. The RuvB hexamer acts as an ATP-dependent pump, pulling dsDNA into and through the RuvAB complex. HJ branch migration allows RuvC to scan DNA until it finds its consensus sequence, where it cleaves and resolves the cruciform DNA. The sequence is that of Holliday junction branch migration complex subunit RuvA from Thermomicrobium roseum (strain ATCC 27502 / DSM 5159 / P-2).